We begin with the raw amino-acid sequence, 1253 residues long: Myosin-1 (1253 aa).

The segment at 1–40 (MGHSRRPVGGEKKSRGFGRSKAAADVGDGRQAGKPQVKKA) is disordered. In terms of domain architecture, Myosin motor spans 50 to 729 (IGVSDLTLLS…TLFALEAMRD (680 aa)). 143–150 (GESGAGKT) is an ATP binding site. Ser371 carries the phosphoserine modification. Residues 418 to 500 (SIGILDIYGF…PGVFAALNDA (83 aa)) form an actin-binding region. IQ domains lie at 733-753 (HNMA…RIEC) and 754-779 (ATRI…QGHQ). The region spanning 787–977 (RRRMSLLGSR…TIHTGAGEPA (191 aa)) is the TH1 domain. Disordered stretches follow at residues 959 to 1083 (TGDD…PKKP) and 1139 to 1253 (QVAP…DDDW). A compositionally biased stretch (low complexity) spans 1029–1055 (PQPAAAQPAAPQPAARVVPQPVAAVAA). 2 stretches are compositionally biased toward pro residues: residues 1068 to 1081 (APPP…PAPK) and 1143 to 1155 (APKP…PPAA). The SH3 domain occupies 1080–1141 (PKKPTAKALY…PEAYLEEQVA (62 aa)). Composition is skewed to low complexity over residues 1156 to 1173 (PRST…AKAK) and 1221 to 1235 (NSAS…LAEA).

Belongs to the TRAFAC class myosin-kinesin ATPase superfamily. Myosin family. Phosphorylation of the TEDS site (Ser-371) is required for the polarization of the actin cytoskeleton. Phosphorylation probably activates the myosin-I ATPase activity.

It is found in the cytoplasm. The protein localises to the cytoskeleton. It localises to the actin patch. Its function is as follows. Type-I myosin implicated in the organization of the actin cytoskeleton. Required for proper actin cytoskeleton polarization. At the cell cortex, assembles in patch-like structures together with proteins from the actin-polymerizing machinery and promotes actin assembly. Functions as actin nucleation-promoting factor (NPF) for the Arp2/3 complex. Plays an important role in polarized growth, spore germination, hyphal morphogenesis, and septal wall formation. The sequence is that of Myosin-1 (myoA) from Aspergillus clavatus (strain ATCC 1007 / CBS 513.65 / DSM 816 / NCTC 3887 / NRRL 1 / QM 1276 / 107).